A 147-amino-acid chain; its full sequence is SPI-1 type 3 secretion system pilotin (147 aa).

A signal peptide spans 1-15; sequence MKKFYSCLPVFLLIG. Cys-16 carries the N-palmitoyl cysteine lipid modification. A lipid anchor (S-diacylglycerol cysteine) is attached at Cys-16.

Belongs to the InvH family.

It localises to the cell outer membrane. Involved in the synthesis of the type III secretion system (T3SS), also called injectisome, which is used to inject bacterial effector proteins into eukaryotic host cells. Pilot protein that is required for the proper localization of the secretin InvG/SctC in the outer membrane. Necessary for efficient adherence and entry of these organisms into cultured epithelial cells. This chain is SPI-1 type 3 secretion system pilotin, found in Salmonella typhimurium (strain SL1344).